The chain runs to 443 residues: Phosphoglucosamine mutase (443 aa).

Catalysis depends on serine 100, which acts as the Phosphoserine intermediate. Mg(2+) is bound by residues serine 100, aspartate 240, aspartate 242, and aspartate 244. Serine 100 carries the phosphoserine modification.

This sequence belongs to the phosphohexose mutase family. Mg(2+) serves as cofactor. Post-translationally, activated by phosphorylation.

The catalysed reaction is alpha-D-glucosamine 1-phosphate = D-glucosamine 6-phosphate. In terms of biological role, catalyzes the conversion of glucosamine-6-phosphate to glucosamine-1-phosphate. This Carboxydothermus hydrogenoformans (strain ATCC BAA-161 / DSM 6008 / Z-2901) protein is Phosphoglucosamine mutase.